Reading from the N-terminus, the 284-residue chain is Bifunctional protein FolD (284 aa).

Residues 166–168 (GAS) and isoleucine 232 contribute to the NADP(+) site.

The protein belongs to the tetrahydrofolate dehydrogenase/cyclohydrolase family. As to quaternary structure, homodimer.

The catalysed reaction is (6R)-5,10-methylene-5,6,7,8-tetrahydrofolate + NADP(+) = (6R)-5,10-methenyltetrahydrofolate + NADPH. It catalyses the reaction (6R)-5,10-methenyltetrahydrofolate + H2O = (6R)-10-formyltetrahydrofolate + H(+). It participates in one-carbon metabolism; tetrahydrofolate interconversion. Functionally, catalyzes the oxidation of 5,10-methylenetetrahydrofolate to 5,10-methenyltetrahydrofolate and then the hydrolysis of 5,10-methenyltetrahydrofolate to 10-formyltetrahydrofolate. The polypeptide is Bifunctional protein FolD (Shewanella baltica (strain OS195)).